The sequence spans 364 residues: Fructose-bisphosphate aldolase B (364 aa).

2 residues coordinate substrate: R56 and K147. The active-site Proton acceptor is E188. The active-site Schiff-base intermediate with dihydroxyacetone-P is the K230.

Belongs to the class I fructose-bisphosphate aldolase family. In terms of assembly, homotetramer.

It localises to the cytoplasm. The protein resides in the cytoskeleton. It is found in the microtubule organizing center. Its subcellular location is the centrosome. The protein localises to the centriolar satellite. The enzyme catalyses beta-D-fructose 1,6-bisphosphate = D-glyceraldehyde 3-phosphate + dihydroxyacetone phosphate. The protein operates within carbohydrate degradation; glycolysis; D-glyceraldehyde 3-phosphate and glycerone phosphate from D-glucose: step 4/4. This is Fructose-bisphosphate aldolase B (ALDOB) from Gallus gallus (Chicken).